We begin with the raw amino-acid sequence, 324 residues long: Biotin synthase (324 aa).

The Radical SAM core domain occupies 37-264 (NEVQVAALMN…ASYVRLAAGR (228 aa)). [4Fe-4S] cluster is bound by residues Cys52, Cys56, and Cys59. [2Fe-2S] cluster-binding residues include Cys96, Cys127, Cys187, and Arg259.

This sequence belongs to the radical SAM superfamily. Biotin synthase family. Homodimer. The cofactor is [4Fe-4S] cluster. Requires [2Fe-2S] cluster as cofactor.

It catalyses the reaction (4R,5S)-dethiobiotin + (sulfur carrier)-SH + 2 reduced [2Fe-2S]-[ferredoxin] + 2 S-adenosyl-L-methionine = (sulfur carrier)-H + biotin + 2 5'-deoxyadenosine + 2 L-methionine + 2 oxidized [2Fe-2S]-[ferredoxin]. Its pathway is cofactor biosynthesis; biotin biosynthesis; biotin from 7,8-diaminononanoate: step 2/2. In terms of biological role, catalyzes the conversion of dethiobiotin (DTB) to biotin by the insertion of a sulfur atom into dethiobiotin via a radical-based mechanism. This is Biotin synthase from Anaplasma marginale (strain Florida).